Here is a 252-residue protein sequence, read N- to C-terminus: D-aminoacyl-tRNA deacylase (252 aa).

This sequence belongs to the DtdA deacylase family. Monomer. Requires Zn(2+) as cofactor.

It carries out the reaction a D-aminoacyl-tRNA + H2O = a tRNA + a D-alpha-amino acid + H(+). The enzyme catalyses glycyl-tRNA(Ala) + H2O = tRNA(Ala) + glycine + H(+). Functionally, D-aminoacyl-tRNA deacylase with broad substrate specificity. By recycling D-aminoacyl-tRNA to D-amino acids and free tRNA molecules, this enzyme counteracts the toxicity associated with the formation of D-aminoacyl-tRNA entities in vivo. This chain is D-aminoacyl-tRNA deacylase, found in Pyrobaculum neutrophilum (strain DSM 2338 / JCM 9278 / NBRC 100436 / V24Sta) (Thermoproteus neutrophilus).